The primary structure comprises 105 residues: Replication initiation control protein YabA (105 aa).

Positions 79, 81, 95, and 98 each coordinate Zn(2+).

This sequence belongs to the YabA family. Homotetramer. Interacts with both DnaA and DnaN, acting as a bridge between these two proteins. Zn(2+) serves as cofactor.

It is found in the cytoplasm. It localises to the nucleoid. Involved in control of chromosome replication initiation. Inhibits the cooperative binding of DnaA to the oriC region, thus negatively regulating initiation of chromosome replication. Inhibits the ability of DnaA-ATP to form a helix on DNA; does not disassemble preformed DnaA-DNA helices. Decreases the residence time of DnaA on the chromosome at its binding sites (oriC, replication forks and promoter-binding sites). Tethers DnaA to the replication machinery via the DNA polymerase beta sliding clamp subunit (dnaN). Associates with oriC and other DnaA targets on the chromosome in a DnaA-dependent manner. This Streptococcus suis (strain 98HAH33) protein is Replication initiation control protein YabA.